A 208-amino-acid polypeptide reads, in one-letter code: GTP cyclohydrolase 1 (208 aa).

Cys-98, His-101, and Cys-169 together coordinate Zn(2+).

This sequence belongs to the GTP cyclohydrolase I family. In terms of assembly, toroid-shaped homodecamer, composed of two pentamers of five dimers.

The enzyme catalyses GTP + H2O = 7,8-dihydroneopterin 3'-triphosphate + formate + H(+). Its pathway is cofactor biosynthesis; 7,8-dihydroneopterin triphosphate biosynthesis; 7,8-dihydroneopterin triphosphate from GTP: step 1/1. The sequence is that of GTP cyclohydrolase 1 from Agrobacterium fabrum (strain C58 / ATCC 33970) (Agrobacterium tumefaciens (strain C58)).